Consider the following 225-residue polypeptide: Ribonuclease 3 (225 aa).

Residues 2–128 enclose the RNase III domain; the sequence is LSTLIKKLKI…LFGAIYLDLG (127 aa). A Mg(2+)-binding site is contributed by E43. Residue D47 is part of the active site. N114 and E117 together coordinate Mg(2+). E117 is an active-site residue. Positions 152–220 constitute a DRBM domain; it reads DFKTQLQELV…ARYVLNILSK (69 aa).

Belongs to the ribonuclease III family. In terms of assembly, homodimer. Mg(2+) is required as a cofactor.

It localises to the cytoplasm. The enzyme catalyses Endonucleolytic cleavage to 5'-phosphomonoester.. Functionally, digests double-stranded RNA. Involved in the processing of primary rRNA transcript to yield the immediate precursors to the large and small rRNAs (23S and 16S). Processes some mRNAs, and tRNAs when they are encoded in the rRNA operon. Processes pre-crRNA and tracrRNA of type II CRISPR loci if present in the organism. This chain is Ribonuclease 3, found in Phytoplasma mali (strain AT).